The sequence spans 75 residues: Cruzioseptin-8 (75 aa).

An N-terminal signal peptide occupies residues 1-22 (MAFLKKCLFLVLFLGLVSLSIC). The propeptide occupies 23-43 (EEEKREEENEEVQEDDDQSEE). The tract at residues 25-44 (EKREEENEEVQEDDDQSEEK) is disordered. Residues 30–41 (ENEEVQEDDDQS) are compositionally biased toward acidic residues. Q72 bears the Glutamine amide mark. The propeptide occupies 74-75 (EQ).

As to expression, expressed by the skin glands.

Its subcellular location is the secreted. Its function is as follows. Has antimicrobial activity. This is Cruzioseptin-8 from Cruziohyla calcarifer (Splendid leaf frog).